The chain runs to 207 residues: Zinc finger protein 487 (207 aa).

Positions M1–L43 constitute a KRAB domain. The segment at K177 to C202 adopts a C2H2-type; atypical zinc-finger fold.

It belongs to the krueppel C2H2-type zinc-finger protein family.

The protein resides in the nucleus. In terms of biological role, may be involved in transcriptional regulation. The protein is Zinc finger protein 487 (ZNF487) of Homo sapiens (Human).